The primary structure comprises 498 residues: MAEDSESAASQQSLELDDQDTCGIDGDNEEETEHAKGSPGGYLGAKKKKKKQKRKKEKPNSGGTKSDSASDSQEIKIQQPSKNPSVPMQKLQDIQRAMELLSACQGPARNIDEAAKHRYQFWDTQPVPKLDEVITSHGAIEPDKDNVRQEPYSLPQGFMWDTLDLSDAEVLKELYTLLNENYVEDDDNMFRFDYSPEFLLWALRPPGWLLQWHCGVRVSSNKKLVGFISAIPANIRIYDSVKKMVEINFLCVHKKLRSKRVAPVLIREITRRVNLEGIFQAVYTAGVVLPKPIATCRYWHRSLNPRKLVEVKFSHLSRNMTLQRTMKLYRLPDVTKTSGLRPMEPKDIKSVRELINTYLKQFHLAPVMDEEEVAHWFLPREHIIDTFVVESPNGKLTDFLSFYTLPSTVMHHPAHKSLKAAYSFYNIHTETPLLDLMSDALILAKSKGFDVFNALDLMENKTFLEKLKFGIGDGNLQYYLYNWRCPGTDSEKVGLVLQ.

A disordered region spans residues 1-88 (MAEDSESAAS…QPSKNPSVPM (88 aa)). A compositionally biased stretch (acidic residues) spans 15 to 32 (ELDDQDTCGIDGDNEEET). Serine 38 is subject to Phosphoserine. Residues 45-57 (AKKKKKKQKRKKE) show a composition bias toward basic residues. A compositionally biased stretch (polar residues) spans 61-86 (SGGTKSDSASDSQEIKIQQPSKNPSV). Histidine 117, tryptophan 122, leucine 250, valine 252, serine 258, arginine 260, valine 261, and alanine 262 together coordinate tetradecanoyl-CoA.

This sequence belongs to the NMT family.

It is found in the cytoplasm. The protein localises to the membrane. It catalyses the reaction N-terminal glycyl-[protein] + tetradecanoyl-CoA = N-tetradecanoylglycyl-[protein] + CoA + H(+). The enzyme catalyses N-terminal glycyl-L-lysyl-[protein] + tetradecanoyl-CoA = N-terminal glycyl-(N(6)-tetradecanoyl)-L-lysyl-[protein] + CoA + H(+). Its function is as follows. Adds a myristoyl group to the N-terminal glycine residue of certain cellular and viral proteins. Also able to mediate N-terminal lysine myristoylation of proteins: catalyzes myristoylation of ARF6 on both 'Gly-2' and 'Lys-3'. Lysine myristoylation is required to maintain ARF6 on membranes during the GTPase cycle. This chain is Glycylpeptide N-tetradecanoyltransferase 2, found in Homo sapiens (Human).